Reading from the N-terminus, the 463-residue chain is GTPase Der (463 aa).

2 consecutive EngA-type G domains span residues lysine 2–lysine 164 and isoleucine 198–threonine 369. Residues glycine 8–serine 15, aspartate 55–leucine 59, asparagine 116–aspartate 119, glycine 204–serine 211, aspartate 251–isoleucine 255, and asparagine 315–aspartate 318 contribute to the GTP site. The KH-like domain occupies glutamine 370–serine 454.

The protein belongs to the TRAFAC class TrmE-Era-EngA-EngB-Septin-like GTPase superfamily. EngA (Der) GTPase family. As to quaternary structure, associates with the 50S ribosomal subunit.

Functionally, GTPase that plays an essential role in the late steps of ribosome biogenesis. The chain is GTPase Der from Campylobacter fetus subsp. fetus (strain 82-40).